We begin with the raw amino-acid sequence, 638 residues long: Phosphomethylpyrimidine synthase (638 aa).

Substrate-binding positions include N243, M272, Y301, H337, 357–359 (SRG), 398–401 (DGLR), and E437. Residue H441 participates in Zn(2+) binding. A substrate-binding site is contributed by Y464. Zn(2+) is bound at residue H505. 3 residues coordinate [4Fe-4S] cluster: C585, C588, and C593.

This sequence belongs to the ThiC family. In terms of assembly, homodimer. The cofactor is [4Fe-4S] cluster.

It carries out the reaction 5-amino-1-(5-phospho-beta-D-ribosyl)imidazole + S-adenosyl-L-methionine = 4-amino-2-methyl-5-(phosphooxymethyl)pyrimidine + CO + 5'-deoxyadenosine + formate + L-methionine + 3 H(+). It participates in cofactor biosynthesis; thiamine diphosphate biosynthesis. Catalyzes the synthesis of the hydroxymethylpyrimidine phosphate (HMP-P) moiety of thiamine from aminoimidazole ribotide (AIR) in a radical S-adenosyl-L-methionine (SAM)-dependent reaction. The polypeptide is Phosphomethylpyrimidine synthase (Aromatoleum aromaticum (strain DSM 19018 / LMG 30748 / EbN1) (Azoarcus sp. (strain EbN1))).